A 362-amino-acid chain; its full sequence is Aminomethyltransferase (362 aa).

It belongs to the GcvT family. As to quaternary structure, the glycine cleavage system is composed of four proteins: P, T, L and H.

It catalyses the reaction N(6)-[(R)-S(8)-aminomethyldihydrolipoyl]-L-lysyl-[protein] + (6S)-5,6,7,8-tetrahydrofolate = N(6)-[(R)-dihydrolipoyl]-L-lysyl-[protein] + (6R)-5,10-methylene-5,6,7,8-tetrahydrofolate + NH4(+). Its function is as follows. The glycine cleavage system catalyzes the degradation of glycine. The sequence is that of Aminomethyltransferase from Listeria monocytogenes serotype 4b (strain F2365).